Reading from the N-terminus, the 265-residue chain is Uroporphyrinogen-III synthase (265 aa).

It belongs to the uroporphyrinogen-III synthase family. As to quaternary structure, monomer.

It localises to the cytoplasm. Its subcellular location is the cytosol. It catalyses the reaction hydroxymethylbilane = uroporphyrinogen III + H2O. It functions in the pathway porphyrin-containing compound metabolism; protoporphyrin-IX biosynthesis; coproporphyrinogen-III from 5-aminolevulinate: step 3/4. Its function is as follows. Catalyzes cyclization of the linear tetrapyrrole, hydroxymethylbilane, to the macrocyclic uroporphyrinogen III, the branch point for the various sub-pathways leading to the wide diversity of porphyrins. Porphyrins act as cofactors for a multitude of enzymes that perform a variety of processes within the cell such as methionine synthesis (vitamin B12) or oxygen transport (heme). In Mus musculus (Mouse), this protein is Uroporphyrinogen-III synthase (Uros).